A 277-amino-acid polypeptide reads, in one-letter code: NADPH-dependent 7-cyano-7-deazaguanine reductase (277 aa).

Position 83–85 (83–85 (IES)) interacts with substrate. Position 85-86 (85-86 (SK)) interacts with NADPH. Cysteine 184 serves as the catalytic Thioimide intermediate. Aspartate 191 functions as the Proton donor in the catalytic mechanism. 223 to 224 (HE) contributes to the substrate binding site. 252–253 (RG) provides a ligand contact to NADPH.

It belongs to the GTP cyclohydrolase I family. QueF type 2 subfamily. As to quaternary structure, homodimer.

Its subcellular location is the cytoplasm. It carries out the reaction 7-aminomethyl-7-carbaguanine + 2 NADP(+) = 7-cyano-7-deazaguanine + 2 NADPH + 3 H(+). It participates in tRNA modification; tRNA-queuosine biosynthesis. Its function is as follows. Catalyzes the NADPH-dependent reduction of 7-cyano-7-deazaguanine (preQ0) to 7-aminomethyl-7-deazaguanine (preQ1). This chain is NADPH-dependent 7-cyano-7-deazaguanine reductase, found in Cupriavidus pinatubonensis (strain JMP 134 / LMG 1197) (Cupriavidus necator (strain JMP 134)).